Reading from the N-terminus, the 308-residue chain is Ribosomal RNA small subunit methyltransferase H (308 aa).

Residues 33 to 35 (GGH), Asp52, Phe78, Asp99, and Gln106 contribute to the S-adenosyl-L-methionine site. The tract at residues 289–308 (EEIETNSRSRSAKLRVAEKL) is disordered.

This sequence belongs to the methyltransferase superfamily. RsmH family.

The protein resides in the cytoplasm. It catalyses the reaction cytidine(1402) in 16S rRNA + S-adenosyl-L-methionine = N(4)-methylcytidine(1402) in 16S rRNA + S-adenosyl-L-homocysteine + H(+). In terms of biological role, specifically methylates the N4 position of cytidine in position 1402 (C1402) of 16S rRNA. In Thermoanaerobacter sp. (strain X514), this protein is Ribosomal RNA small subunit methyltransferase H.